The sequence spans 453 residues: Cytochrome b-c1 complex subunit 2, mitochondrial (453 aa).

Residues 1-14 (MKLLTRAGSFSRFY) constitute a mitochondrion transit peptide. N6-acetyllysine is present on residues lysine 66, lysine 199, and lysine 250.

Belongs to the peptidase M16 family. UQCRC2/QCR2 subfamily. As to quaternary structure, component of the ubiquinol-cytochrome c oxidoreductase (cytochrome b-c1 complex, complex III, CIII), a multisubunit enzyme composed of 11 subunits. The complex is composed of 3 respiratory subunits cytochrome b, cytochrome c1 and Rieske protein UQCRFS1, 2 core protein subunits UQCRC1/QCR1 and UQCRC2/QCR2, and 6 low-molecular weight protein subunits UQCRH/QCR6, UQCRB/QCR7, UQCRQ/QCR8, UQCR10/QCR9, UQCR11/QCR10 and subunit 9, the cleavage product of Rieske protein UQCRFS1. The complex exists as an obligatory dimer and forms supercomplexes (SCs) in the inner mitochondrial membrane with NADH-ubiquinone oxidoreductase (complex I, CI) and cytochrome c oxidase (complex IV, CIV), resulting in different assemblies (supercomplex SCI(1)III(2)IV(1) and megacomplex MCI(2)III(2)IV(2)). Interacts with RAB5IF. Interacts with STMP1.

It is found in the mitochondrion inner membrane. Functionally, component of the ubiquinol-cytochrome c oxidoreductase, a multisubunit transmembrane complex that is part of the mitochondrial electron transport chain which drives oxidative phosphorylation. The respiratory chain contains 3 multisubunit complexes succinate dehydrogenase (complex II, CII), ubiquinol-cytochrome c oxidoreductase (cytochrome b-c1 complex, complex III, CIII) and cytochrome c oxidase (complex IV, CIV), that cooperate to transfer electrons derived from NADH and succinate to molecular oxygen, creating an electrochemical gradient over the inner membrane that drives transmembrane transport and the ATP synthase. The cytochrome b-c1 complex catalyzes electron transfer from ubiquinol to cytochrome c, linking this redox reaction to translocation of protons across the mitochondrial inner membrane, with protons being carried across the membrane as hydrogens on the quinol. In the process called Q cycle, 2 protons are consumed from the matrix, 4 protons are released into the intermembrane space and 2 electrons are passed to cytochrome c. The 2 core subunits UQCRC1/QCR1 and UQCRC2/QCR2 are homologous to the 2 mitochondrial-processing peptidase (MPP) subunits beta-MPP and alpha-MPP respectively, and they seem to have preserved their MPP processing properties. May be involved in the in situ processing of UQCRFS1 into the mature Rieske protein and its mitochondrial targeting sequence (MTS)/subunit 9 when incorporated into complex III. The protein is Cytochrome b-c1 complex subunit 2, mitochondrial (UQCRC2) of Homo sapiens (Human).